A 375-amino-acid polypeptide reads, in one-letter code: Queuine tRNA-ribosyltransferase (375 aa).

Asp89 functions as the Proton acceptor in the catalytic mechanism. Substrate is bound by residues 89–93 (DSGGF), Asp143, Gln187, and Gly214. The segment at 245-251 (GVGKPED) is RNA binding. The active-site Nucleophile is Asp264. An RNA binding; important for wobble base 34 recognition region spans residues 269–273 (TRNAR). The Zn(2+) site is built by Cys302, Cys304, Cys307, and His333.

This sequence belongs to the queuine tRNA-ribosyltransferase family. Homodimer. Within each dimer, one monomer is responsible for RNA recognition and catalysis, while the other monomer binds to the replacement base PreQ1. Zn(2+) is required as a cofactor.

It catalyses the reaction 7-aminomethyl-7-carbaguanine + guanosine(34) in tRNA = 7-aminomethyl-7-carbaguanosine(34) in tRNA + guanine. The protein operates within tRNA modification; tRNA-queuosine biosynthesis. Catalyzes the base-exchange of a guanine (G) residue with the queuine precursor 7-aminomethyl-7-deazaguanine (PreQ1) at position 34 (anticodon wobble position) in tRNAs with GU(N) anticodons (tRNA-Asp, -Asn, -His and -Tyr). Catalysis occurs through a double-displacement mechanism. The nucleophile active site attacks the C1' of nucleotide 34 to detach the guanine base from the RNA, forming a covalent enzyme-RNA intermediate. The proton acceptor active site deprotonates the incoming PreQ1, allowing a nucleophilic attack on the C1' of the ribose to form the product. After dissociation, two additional enzymatic reactions on the tRNA convert PreQ1 to queuine (Q), resulting in the hypermodified nucleoside queuosine (7-(((4,5-cis-dihydroxy-2-cyclopenten-1-yl)amino)methyl)-7-deazaguanosine). The polypeptide is Queuine tRNA-ribosyltransferase (Photobacterium profundum (strain SS9)).